Here is a 564-residue protein sequence, read N- to C-terminus: MVTVQDFFRKFIEFQNSPNEKSLQEIVKLVGQLDLRRFNWVRDVFEDIHVKERGSKTALIWRDINTGEEAKLSYHELSLMSNRVLSTLRKHGLKKGDVVYLMTKVHPMHWAVFLAVIKGGFVMVPSATNLTVAEMKYRFSDLKPSAIISDSLRASVMEEALGSLKVEKFLIDGKRETWNSLEDESSNAEPEDTRGEDVIINYFTSGTTGMPKRVIHTAVSYPVGSITTASIVGVRESDLHLNLSATGWAKFAWSSFFSPLLVGATVVGINYEGKLDTRRYLGEVENLGVTSFCAPPTAWRQFITLDLDQFRFERLRSVVSAGEPLNPEVIKIWKDKFNLTIRDFYGQTETTAMVGNFPFLKVKPGSMGKPHPLYDIRLLDDEGKEITKPYEVGHITVKLNPRPIGLFLGYSDEKKNMESFREGYYYTGDKAYFDEEGYFYFVGRGDDVIKTSDYRVGPFEVESALLEHPAVAEAAVVGVPDTVRWQLVKAYIVLKKGYMPSKELAEEIREKMKTLLSPYKVPRIIEFVDELPKTISGKIRRVELRKREEEKRKKGEVGQNEYVF.

A helical transmembrane segment spans residues 105-125 (VHPMHWAVFLAVIKGGFVMVP). ATP-binding positions include 204-212 (TSGTTGMPK), 343-348 (DFYGQT), D429, and R444. Substrate is bound at residue T348. 452–454 (SDY) provides a ligand contact to CoA. R455 contributes to the substrate binding site. CoA-binding positions include R484, K513, and 521-523 (VPR). K538 serves as a coordination point for ATP.

This sequence belongs to the ATP-dependent AMP-binding enzyme family. Mg(2+) serves as cofactor. The cofactor is Mn(2+).

The protein localises to the membrane. It carries out the reaction 4-hydroxybutanoate + ATP + CoA = 4-hydroxybutanoyl-CoA + AMP + diphosphate. The enzyme catalyses acetate + ATP + CoA = acetyl-CoA + AMP + diphosphate. The catalysed reaction is propanoate + ATP + CoA = propanoyl-CoA + AMP + diphosphate. It catalyses the reaction a medium-chain fatty acid + ATP + CoA = a medium-chain fatty acyl-CoA + AMP + diphosphate. In terms of biological role, involved in the 3-hydroxypropionate/4-hydroxybutyrate cycle which incorporates carbon dioxide into cellular carbon. Catalyzes the ligation of coenzyme A (CoA) to 4-hydroxybutyrate (4HB). It can also use butyrate, valerate, propionate, acetate and 3-hydroxybutyrate (3HB) as substrates. The protein is 4-hydroxybutyrate--CoA ligase 1 of Metallosphaera sedula (strain ATCC 51363 / DSM 5348 / JCM 9185 / NBRC 15509 / TH2).